The sequence spans 682 residues: Potassium-transporting ATPase ATP-binding subunit (682 aa).

Transmembrane regions (helical) follow at residues 34-54, 58-78, 219-239, and 254-274; these read PVMF…LAMV, IAGS…TVLF, IALT…TATL, and VLVA…LSAI. Aspartate 307 functions as the 4-aspartylphosphate intermediate in the catalytic mechanism. Residues aspartate 344, glutamate 348, 377–384, and lysine 395 each bind ATP; that span reads FTAQSRMS. Positions 518 and 522 each coordinate Mg(2+). 3 helical membrane passes run 588–608, 616–636, and 662–682; these read FAII…LNVM, AILS…PLAL, and LVVP…LGLA.

It belongs to the cation transport ATPase (P-type) (TC 3.A.3) family. Type IA subfamily. As to quaternary structure, the system is composed of three essential subunits: KdpA, KdpB and KdpC.

The protein localises to the cell inner membrane. It catalyses the reaction K(+)(out) + ATP + H2O = K(+)(in) + ADP + phosphate + H(+). Its function is as follows. Part of the high-affinity ATP-driven potassium transport (or Kdp) system, which catalyzes the hydrolysis of ATP coupled with the electrogenic transport of potassium into the cytoplasm. This subunit is responsible for energy coupling to the transport system and for the release of the potassium ions to the cytoplasm. The protein is Potassium-transporting ATPase ATP-binding subunit of Salmonella newport (strain SL254).